A 410-amino-acid chain; its full sequence is Protein translocase subunit SecY (410 aa).

Transmembrane regions (helical) follow at residues Leu-61–Leu-81, Ile-106–Leu-126, Leu-135–Leu-155, Val-170–Val-190, Phe-195–Val-215, Gln-248–Ile-268, Ile-289–Leu-309, Leu-349–Phe-369, and Val-373–Ile-393.

Belongs to the SecY/SEC61-alpha family. In terms of assembly, component of the plastid Sec protein translocase complex, which is composed of at least SecY and SecE.

Its subcellular location is the plastid. The protein localises to the chloroplast thylakoid membrane. Its function is as follows. The central subunit of the protein translocation channel SecYE. Consists of two halves formed by TMs 1-5 and 6-10. These two domains form a lateral gate at the front which open onto the bilayer between TMs 2 and 7, and are clamped together by SecE at the back. The channel is closed by both a pore ring composed of hydrophobic SecY resides and a short helix (helix 2A) on the extracellular side of the membrane which forms a plug. In Cyanidium caldarium (Red alga), this protein is Protein translocase subunit SecY.